The chain runs to 172 residues: uncharacterized protein (172 aa).

4 helical membrane-spanning segments follow: residues 1-21 (MLFI…SLSI), 41-61 (NSTL…IEAN), 72-92 (QIGL…IYEL), and 136-156 (FCQA…ILAV).

It localises to the cell membrane. This is an uncharacterized protein from Haemophilus influenzae (strain ATCC 51907 / DSM 11121 / KW20 / Rd).